The following is a 312-amino-acid chain: Elongation factor Ts (312 aa).

The segment at 80 to 83 (TDFV) is involved in Mg(2+) ion dislocation from EF-Tu.

This sequence belongs to the EF-Ts family.

The protein localises to the cytoplasm. Functionally, associates with the EF-Tu.GDP complex and induces the exchange of GDP to GTP. It remains bound to the aminoacyl-tRNA.EF-Tu.GTP complex up to the GTP hydrolysis stage on the ribosome. The protein is Elongation factor Ts of Maricaulis maris (strain MCS10) (Caulobacter maris).